We begin with the raw amino-acid sequence, 232 residues long: NAD(P)H-hydrate epimerase (232 aa).

The YjeF N-terminal domain occupies A9 to L219. N62–D66 lines the (6S)-NADPHX pocket. K(+) is bound by residues N63 and D127. (6S)-NADPHX-binding positions include G131 to P137 and D160. K(+) is bound at residue S163.

The protein belongs to the NnrE/AIBP family. K(+) serves as cofactor.

The enzyme catalyses (6R)-NADHX = (6S)-NADHX. It catalyses the reaction (6R)-NADPHX = (6S)-NADPHX. Functionally, catalyzes the epimerization of the S- and R-forms of NAD(P)HX, a damaged form of NAD(P)H that is a result of enzymatic or heat-dependent hydration. This is a prerequisite for the S-specific NAD(P)H-hydrate dehydratase to allow the repair of both epimers of NAD(P)HX. This is NAD(P)H-hydrate epimerase from Aedes aegypti (Yellowfever mosquito).